The chain runs to 279 residues: Energy-coupling factor transporter ATP-binding protein EcfA1 (279 aa).

An ABC transporter domain is found at 5 to 240 (IELKKVTFNY…GDELLQLGLD (236 aa)). Residue 40 to 47 (GHNGSGKS) coordinates ATP.

It belongs to the ABC transporter superfamily. Energy-coupling factor EcfA family. As to quaternary structure, forms a stable energy-coupling factor (ECF) transporter complex composed of 2 membrane-embedded substrate-binding proteins (S component), 2 ATP-binding proteins (A component) and 2 transmembrane proteins (T component).

It is found in the cell membrane. Functionally, ATP-binding (A) component of a common energy-coupling factor (ECF) ABC-transporter complex. Unlike classic ABC transporters this ECF transporter provides the energy necessary to transport a number of different substrates. The sequence is that of Energy-coupling factor transporter ATP-binding protein EcfA1 from Streptococcus pyogenes serotype M12 (strain MGAS2096).